The primary structure comprises 118 residues: Ribonuclease P protein component (118 aa).

This sequence belongs to the RnpA family. In terms of assembly, consists of a catalytic RNA component (M1 or rnpB) and a protein subunit.

The enzyme catalyses Endonucleolytic cleavage of RNA, removing 5'-extranucleotides from tRNA precursor.. Functionally, RNaseP catalyzes the removal of the 5'-leader sequence from pre-tRNA to produce the mature 5'-terminus. It can also cleave other RNA substrates such as 4.5S RNA. The protein component plays an auxiliary but essential role in vivo by binding to the 5'-leader sequence and broadening the substrate specificity of the ribozyme. The chain is Ribonuclease P protein component from Bifidobacterium animalis subsp. lactis (strain AD011).